We begin with the raw amino-acid sequence, 594 residues long: Aspartate--tRNA(Asp/Asn) ligase (594 aa).

Glu175 lines the L-aspartate pocket. The tract at residues 199–202 (QQFK) is aspartate. The L-aspartate site is built by Arg221 and His455. An ATP-binding site is contributed by 221–223 (RDE). An ATP-binding site is contributed by Glu489. Position 496 (Arg496) interacts with L-aspartate. Residue 541–544 (GIDR) coordinates ATP.

Belongs to the class-II aminoacyl-tRNA synthetase family. Type 1 subfamily. As to quaternary structure, homodimer.

It is found in the cytoplasm. It carries out the reaction tRNA(Asx) + L-aspartate + ATP = L-aspartyl-tRNA(Asx) + AMP + diphosphate. In terms of biological role, aspartyl-tRNA synthetase with relaxed tRNA specificity since it is able to aspartylate not only its cognate tRNA(Asp) but also tRNA(Asn). Reaction proceeds in two steps: L-aspartate is first activated by ATP to form Asp-AMP and then transferred to the acceptor end of tRNA(Asp/Asn). This Pelagibacter ubique (strain HTCC1062) protein is Aspartate--tRNA(Asp/Asn) ligase.